A 170-amino-acid chain; its full sequence is Protein-lysine myristoyltransferase HlyC (170 aa).

Catalysis depends on residues H23 and D92. Heme is bound at residue H151.

Belongs to the RTX toxin acyltransferase family. Monomer. Post-translationally, proteolytically cleaved by the protease systems ClpAP, ClpXP and FtsH, leading to its degradation.

It is found in the cytoplasm. It carries out the reaction tetradecanoyl-[ACP] + L-lysyl-[protein] = N(6)-tetradecanoyl-L-lysyl-[protein] + holo-[ACP] + H(+). The acyltransferase activity is inhibited by heme. Its function is as follows. Protein-lysine myristoyltransferase that catalyzes myristoylation of the protoxin (HlyA) at two internal lysine residues, thereby converting it to the active toxin. This Escherichia coli protein is Protein-lysine myristoyltransferase HlyC.